Here is a 159-residue protein sequence, read N- to C-terminus: Crossover junction endodeoxyribonuclease RuvC (159 aa).

Catalysis depends on residues Asp-7, Glu-67, and Asp-139. 3 residues coordinate Mg(2+): Asp-7, Glu-67, and Asp-139.

This sequence belongs to the RuvC family. In terms of assembly, homodimer which binds Holliday junction (HJ) DNA. The HJ becomes 2-fold symmetrical on binding to RuvC with unstacked arms; it has a different conformation from HJ DNA in complex with RuvA. In the full resolvosome a probable DNA-RuvA(4)-RuvB(12)-RuvC(2) complex forms which resolves the HJ. The cofactor is Mg(2+).

It is found in the cytoplasm. It carries out the reaction Endonucleolytic cleavage at a junction such as a reciprocal single-stranded crossover between two homologous DNA duplexes (Holliday junction).. Functionally, the RuvA-RuvB-RuvC complex processes Holliday junction (HJ) DNA during genetic recombination and DNA repair. Endonuclease that resolves HJ intermediates. Cleaves cruciform DNA by making single-stranded nicks across the HJ at symmetrical positions within the homologous arms, yielding a 5'-phosphate and a 3'-hydroxyl group; requires a central core of homology in the junction. The consensus cleavage sequence is 5'-(A/T)TT(C/G)-3'. Cleavage occurs on the 3'-side of the TT dinucleotide at the point of strand exchange. HJ branch migration catalyzed by RuvA-RuvB allows RuvC to scan DNA until it finds its consensus sequence, where it cleaves and resolves the cruciform DNA. The protein is Crossover junction endodeoxyribonuclease RuvC of Orientia tsutsugamushi (strain Boryong) (Rickettsia tsutsugamushi).